A 243-amino-acid chain; its full sequence is Terpene cyclase dpmpB (243 aa).

7 helical membrane passes run 13–33 (FLEVAWLADACKLLMGVGWTA), 51–71 (ALMPLCCNFAWELVYALILPF), 78–98 (WVHVTGLAFNCGVMYTAIKFA), 112–132 (LTWIFIASVAGWMSAHLALAA), 141–161 (AWSAYGCQLLLSVGGLCQLLC), 169–189 (SYLLWFSRFFGSLVLIPQDIL), and 207–227 (LWFVSIFLILDGSYGILLWYV).

This sequence belongs to the paxB family.

The protein localises to the membrane. It participates in secondary metabolite biosynthesis; terpenoid biosynthesis. In terms of biological role, terpene cyclase; part of the gene cluster that mediates the biosynthesis of diterpenoid pyrones. The first step of the pathway is the synthesis of the alpha-pyrone moiety by the polyketide synthase dpmpA via condensation of one acetyl-CoA starter unit with 3 malonyl-CoA units and 2 methylations. The alpha-pyrone is then combined with geranylgeranyl pyrophosphate (GGPP) formed by the GGPP synthase dpmpD through the action of the prenyltransferase dpmpC to yield a linear alpha-pyrone diterpenoid. Subsequent steps in the diterpenoid pyrone biosynthetic pathway involve the decalin core formation, which is initiated by the epoxidation of the C10-C11 olefin by the FAD-dependent oxidoreductase dpmpE, and is followed by a cyclization cascade catalyzed by the terpene cyclase dpmpB. The short chain dehydrogenase/reductase dpmpG then oxidizes the 8S hydroxy group to a ketone and the short chain dehydrogenase/reductase dpmpH reduces the ketone to the 8R hydroxy group to yield higginsianin B. Higginsianin B is further methylated by the methyltransferase dpmpI to produce the intermediate named FDDP B. The cytochrome P450 monooxygenase dpmpJ then oxidizes the C-26 methyl to primary alcohol, producing the final diterpenoid pyrone with a C-26 primary alcohol on the gamma-pyrone moiety named FDDP C. The sequence is that of Terpene cyclase dpmpB from Macrophomina phaseolina (strain MS6) (Charcoal rot fungus).